A 173-amino-acid chain; its full sequence is Shikimate kinase (173 aa).

14 to 19 (GAGKST) is a binding site for ATP. S18 contacts Mg(2+). Substrate contacts are provided by D36, R60, and G82. R120 contributes to the ATP binding site. R140 contributes to the substrate binding site. Residue Q157 participates in ATP binding.

The protein belongs to the shikimate kinase family. As to quaternary structure, monomer. Mg(2+) serves as cofactor.

The protein localises to the cytoplasm. The enzyme catalyses shikimate + ATP = 3-phosphoshikimate + ADP + H(+). The protein operates within metabolic intermediate biosynthesis; chorismate biosynthesis; chorismate from D-erythrose 4-phosphate and phosphoenolpyruvate: step 5/7. Functionally, catalyzes the specific phosphorylation of the 3-hydroxyl group of shikimic acid using ATP as a cosubstrate. This chain is Shikimate kinase, found in Buchnera aphidicola subsp. Acyrthosiphon pisum (strain APS) (Acyrthosiphon pisum symbiotic bacterium).